The chain runs to 408 residues: AA9 family lytic polysaccharide monooxygenase A (408 aa).

Residues Met-1–Ala-20 form the signal peptide. His-21 and His-103 together coordinate Cu(2+). Residues Cys-63 and Cys-186 are joined by a disulfide bond. The N-linked (GlcNAc...) asparagine glycan is linked to Asn-151. His-172 contacts O2. Position 183 (Tyr-183) interacts with Cu(2+). N-linked (GlcNAc...) asparagine glycosylation is found at Asn-331 and Asn-381. The region spanning Gly-369–Val-405 is the CBM1 domain.

This sequence belongs to the polysaccharide monooxygenase AA9 family. Requires Cu(2+) as cofactor.

The protein localises to the secreted. The catalysed reaction is [(1-&gt;4)-beta-D-glucosyl]n+m + reduced acceptor + O2 = 4-dehydro-beta-D-glucosyl-[(1-&gt;4)-beta-D-glucosyl]n-1 + [(1-&gt;4)-beta-D-glucosyl]m + acceptor + H2O.. Functionally, lytic polysaccharide monooxygenase (LPMO) that depolymerizes crystalline and amorphous polysaccharides via the oxidation of scissile alpha- or beta-(1-4)-glycosidic bonds, yielding C4 oxidation products. Catalysis by LPMOs requires the reduction of the active-site copper from Cu(II) to Cu(I) by a reducing agent and H(2)O(2) or O(2) as a cosubstrate. The polypeptide is AA9 family lytic polysaccharide monooxygenase A (eglD) (Aspergillus kawachii (strain NBRC 4308) (White koji mold)).